We begin with the raw amino-acid sequence, 484 residues long: Probable protein disulfide-isomerase ER-60 (484 aa).

The signal sequence occupies residues 1–14 (MRWLLSCLFLVAFA). 2 Thioredoxin domains span residues 15–125 (SCSK…SRAG) and 338–467 (FEDG…REAT). Catalysis depends on nucleophile residues C46, C49, C388, and C391. 2 cysteine pairs are disulfide-bonded: C46–C49 and C388–C391. The Prevents secretion from ER signature appears at 481 to 484 (KSEL).

The protein belongs to the protein disulfide isomerase family.

The protein localises to the endoplasmic reticulum lumen. The catalysed reaction is Catalyzes the rearrangement of -S-S- bonds in proteins.. This is Probable protein disulfide-isomerase ER-60 from Schistosoma mansoni (Blood fluke).